The sequence spans 460 residues: Glutamyl-tRNA reductase (460 aa).

Residues 48 to 51 (TCNR), Ser-100, 105 to 107 (EDQ), and Gln-111 each bind substrate. The Nucleophile role is filled by Cys-49. 180–185 (GAGEIG) is an NADP(+) binding site.

The protein belongs to the glutamyl-tRNA reductase family. As to quaternary structure, homodimer.

It catalyses the reaction (S)-4-amino-5-oxopentanoate + tRNA(Glu) + NADP(+) = L-glutamyl-tRNA(Glu) + NADPH + H(+). It participates in porphyrin-containing compound metabolism; protoporphyrin-IX biosynthesis; 5-aminolevulinate from L-glutamyl-tRNA(Glu): step 1/2. Its function is as follows. Catalyzes the NADPH-dependent reduction of glutamyl-tRNA(Glu) to glutamate 1-semialdehyde (GSA). The chain is Glutamyl-tRNA reductase from Methanosarcina acetivorans (strain ATCC 35395 / DSM 2834 / JCM 12185 / C2A).